The sequence spans 389 residues: MEKAIRNFLSQESAGGILLLVAVALAMLMANSPLSGLYQGFLGTDVQVKIGELDIHKPLILWINDGLMAVFFLLIGLEVKRELLEGALSSVAQASLPTFAAIGGMLVPAGVYLLFNYGDPVTQAGWAIPAATDIAFALGIMALLGSRVPVSLKVFLLALAIIDDLGVIVIIALFYSTDLSTISLVIASLAIAGLVGLNRKGVTSLLPYGILGLILWVAVLKSGVHATLAGVIIAFCIPLRAKDGSSPSEGLEHSLHPWSTFFILPVFAFANAGVYVGNMNLETLISPVPVGIALGLMLGKPIGVMVFSYIAVKLKLAQLPDGVGWKQIAPVAAMCGIGFTMSMFIASLAFEHADPMYGDLARLGTLIGSIMAALVGYFWLSKVLPNKGV.

11 consecutive transmembrane segments (helical) span residues 14-34 (AGGI…NSPL), 59-79 (LILW…GLEV), 95-115 (SLPT…YLLF), 124-144 (AGWA…MALL), 154-174 (VFLL…IALF), 177-197 (TDLS…LVGL), 213-233 (LILW…GVII), 257-277 (PWST…VYVG), 292-312 (IALG…YIAV), 328-348 (IAPV…IASL), and 363-383 (LGTL…LSKV).

Belongs to the NhaA Na(+)/H(+) (TC 2.A.33) antiporter family.

Its subcellular location is the cell inner membrane. The catalysed reaction is Na(+)(in) + 2 H(+)(out) = Na(+)(out) + 2 H(+)(in). Functionally, na(+)/H(+) antiporter that extrudes sodium in exchange for external protons. The sequence is that of Na(+)/H(+) antiporter NhaA from Shewanella baltica (strain OS223).